Here is a 643-residue protein sequence, read N- to C-terminus: Versicolorin B synthase (643 aa).

Positions 1–41 (MGRNWFQVTAMAVVPVVGIMAAVNPTILSSAASSLPSLGAM) are excised as a propeptide. FAD contacts are provided by residues 84–85 (TA) and 105–106 (EA). N-linked (GlcNAc...) asparagine glycosylation occurs at asparagine 116. Position 171–174 (171–174 (GAML)) interacts with FAD. Asparagine 221 and asparagine 507 each carry an N-linked (GlcNAc...) asparagine glycan. Residues alanine 613 and 624–625 (PM) contribute to the FAD site.

Belongs to the GMC oxidoreductase family. As to quaternary structure, homodimer. The cofactor is FAD. N-glycosylated.

The protein localises to the cytoplasm. It is found in the cytosol. The catalysed reaction is (2S-3S)-versiconal hemiacetal = versicolorin B + H2O. The enzyme catalyses (S)-5'-oxoaverantin + H(+) = (1'S,5'S)-averufin + H2O. The protein operates within mycotoxin biosynthesis; aflatoxin biosynthesis. In terms of biological role, dual cyclase; part of the gene cluster that mediates the biosynthesis of aflatoxins, a group of polyketide-derived furanocoumarins, and part of the most toxic and carcinogenic compounds among the known mycotoxins. The four major aflatoxins produced by A.parasiticus are aflatoxin B1 (AFB1), aflatoxin B2 (AFB2), aflatoxin G1 (AFG1) and aflatoxin G2 (AFG2). Aflk plays a dual role within the aflatoxin pathway, as a 5'-oxoaverantin cyclase that mediates conversion of 5'-oxoaverantin (OAVN) to averufin (AVF), as well as a versicolorin B synthase that converts versiconal (VAL) to versicolorin B (VERB) by closing the bisfuran ring of aflatoxin which is required for DNA-binding, thus giving to aflatoxin its activity as a mutagen. The biosynthesis of aflatoxins begins with the norsolorinic acid synthase aflC that combines a hexanoyl starter unit produced by the fatty acid synthase aflA/aflB and 7 malonyl-CoA extender units to synthesize the precursor NOR. The second step is the conversion of NOR to averantin and requires the norsolorinic acid ketoreductase aflD, which catalyzes the dehydration of norsolorinic acid to form (1'S)-averantin. The norsolorinic acid reductases aflE and aflF may also play a role in the conversion of NOR to AVN. The cytochrome P450 monooxygenase aflG then catalyzes the hydroxylation of AVN to 5'hydroxyaverantin (HAVN). The next step is performed by the 5'-hydroxyaverantin dehydrogenase aflH that transforms HAVN to 5'-oxoaverantin (OAVN) which is further converted to averufin (AVF) by aflK that plays a dual role in the pathway, as a 5'-oxoaverantin cyclase that mediates conversion of 5'-oxoaverantin, as well as a versicolorin B synthase in a later step in the pathway. The averufin oxidase aflI catalyzes the conversion of AVF to versiconal hemiacetal acetate (VHA). VHA is then the substrate for the versiconal hemiacetal acetate esterase aflJ to yield versiconal (VAL). Versicolorin B synthase aflK then converts VAL to versicolorin B (VERB) by closing the bisfuran ring of aflatoxin which is required for DNA-binding, thus giving to aflatoxin its activity as a mutagen. Then, the activity of the versicolorin B desaturase aflL leads to versicolorin A (VERA). A branch point starts from VERB since it can also be converted to dihydrodemethylsterigmatocystin (DMDHST), probably also by aflL, VERA being a precursor for aflatoxins B1 and G1, and DMDHST for aflatoxins B2 and G2. Next, the versicolorin reductase aflM and the cytochrome P450 monooxygenase aflN are involved in conversion of VERA to demethylsterigmatocystin (DMST). AflX and aflY seem also involved in this step, through probable aflX-mediated epoxide ring-opening step following versicolorin A oxidation and aflY-mediated Baeyer-Villiger oxidation required for the formation of the xanthone ring. The methyltransferase aflO then leads to the modification of DMST to sterigmatocystin (ST), and of DMDHST to dihydrosterigmatocystin (DHST). Both ST and DHST are then substrates of the O-methyltransferase aflP to yield O-methylsterigmatocystin (OMST) and dihydro-O-methylsterigmatocystin (DHOMST), respectively. Finally OMST is converted to aflatoxins B1 and G1, and DHOMST to aflatoxins B2 and G2, via the action of several enzymes including O-methylsterigmatocystin oxidoreductase aflQ, the cytochrome P450 monooxygenase aflU, but also the NADH-dependent flavin oxidoreductase nadA which is specifically required for the synthesis of AFG1. The sequence is that of Versicolorin B synthase from Aspergillus parasiticus (strain ATCC 56775 / NRRL 5862 / SRRC 143 / SU-1).